Consider the following 389-residue polypeptide: tRNA-specific 2-thiouridylase MnmA (389 aa).

ATP contacts are provided by residues 33 to 40 and leucine 59; that span reads GLSGGVDS. Cysteine 120 acts as the Nucleophile in catalysis. A disulfide bridge connects residues cysteine 120 and cysteine 219. ATP is bound at residue glycine 145. Residues 169–171 are interaction with tRNA; the sequence is KDQ. The active-site Cysteine persulfide intermediate is cysteine 219. The segment at 326 to 327 is interaction with tRNA; it reads RY.

It belongs to the MnmA/TRMU family.

It is found in the cytoplasm. The catalysed reaction is S-sulfanyl-L-cysteinyl-[protein] + uridine(34) in tRNA + AH2 + ATP = 2-thiouridine(34) in tRNA + L-cysteinyl-[protein] + A + AMP + diphosphate + H(+). Its function is as follows. Catalyzes the 2-thiolation of uridine at the wobble position (U34) of tRNA, leading to the formation of s(2)U34. This is tRNA-specific 2-thiouridylase MnmA from Synechococcus sp. (strain WH7803).